A 447-amino-acid polypeptide reads, in one-letter code: ATP-dependent protease ATPase subunit HslU (447 aa).

ATP-binding positions include isoleucine 18, 60-65 (GVGKTE), aspartate 259, glutamate 325, and arginine 397.

Belongs to the ClpX chaperone family. HslU subfamily. A double ring-shaped homohexamer of HslV is capped on each side by a ring-shaped HslU homohexamer. The assembly of the HslU/HslV complex is dependent on binding of ATP.

The protein localises to the cytoplasm. Its function is as follows. ATPase subunit of a proteasome-like degradation complex; this subunit has chaperone activity. The binding of ATP and its subsequent hydrolysis by HslU are essential for unfolding of protein substrates subsequently hydrolyzed by HslV. HslU recognizes the N-terminal part of its protein substrates and unfolds these before they are guided to HslV for hydrolysis. The protein is ATP-dependent protease ATPase subunit HslU of Burkholderia lata (strain ATCC 17760 / DSM 23089 / LMG 22485 / NCIMB 9086 / R18194 / 383).